A 329-amino-acid chain; its full sequence is Beta-1,3-galactosyltransferase 6 (329 aa).

Residues 1–11 (MKLLRRAWRRR) lie on the Cytoplasmic side of the membrane. Residues 12–34 (AALGLGTLALCGAALLYLARCAA) traverse the membrane as a helical; Signal-anchor for type II membrane protein segment. Topologically, residues 35-329 (EPGDPRAMSG…QCCQRREGIP (295 aa)) are lumenal. Residue asparagine 131 is glycosylated (N-linked (GlcNAc...) asparagine).

The protein belongs to the glycosyltransferase 31 family. Mn(2+) is required as a cofactor. In terms of tissue distribution, ubiquitous.

It localises to the golgi apparatus. The protein resides in the golgi stack membrane. The enzyme catalyses 3-O-(beta-D-galactosyl-(1-&gt;4)-beta-D-xylosyl)-L-seryl-[protein] + UDP-alpha-D-galactose = 3-O-(beta-D-galactosyl-(1-&gt;3)-beta-D-galactosyl-(1-&gt;4)-beta-D-xylosyl)-L-seryl-[protein] + UDP + H(+). It functions in the pathway glycan metabolism; chondroitin sulfate biosynthesis. The protein operates within glycan metabolism; heparan sulfate biosynthesis. Functionally, beta-1,3-galactosyltransferase that transfers galactose from UDP-galactose to substrates with a terminal beta-linked galactose residue. Has a preference for galactose-beta-1,4-xylose that is found in the linker region of glycosaminoglycans, such as heparan sulfate and chondroitin sulfate. Has no activity towards substrates with terminal glucosamine or galactosamine residues. The protein is Beta-1,3-galactosyltransferase 6 (B3GALT6) of Homo sapiens (Human).